The following is a 444-amino-acid chain: Orexin receptor type 2 (444 aa).

A compositionally biased stretch (basic and acidic residues) spans 1–10; it reads MSGTKLEDSP. Positions 1–20 are disordered; sequence MSGTKLEDSPPCRNWSSASE. At 1–54 the chain is on the extracellular side; sequence MSGTKLEDSPPCRNWSSASELNETQEPFLNPTDYDDEEFLRYLWREYLHPKEYE. 2 N-linked (GlcNAc...) asparagine glycosylation sites follow: Asn14 and Asn22. The segment at 33-49 is required for response to orexin-A; sequence DYDDEEFLRYLWREYLH. A helical membrane pass occupies residues 55–75; that stretch reads WVLIAGYIIVFVVALIGNVLV. The Cytoplasmic portion of the chain corresponds to 76–88; it reads CVAVWKNHHMRTV. Residues 89-110 traverse the membrane as a helical segment; that stretch reads TNYFIVNLSLADVLVTITCLPA. Residues 111–127 lie on the Extracellular side of the membrane; sequence TLVVDITETWFFGQSLC. A disulfide bridge links Cys127 with Cys210. A helical transmembrane segment spans residues 128 to 150; it reads KVIPYLQTVSVSVSVLTLSCIAL. Residues 151–170 are Cytoplasmic-facing; that stretch reads DRWYAICHPLMFKSTAKRAR. The chain crosses the membrane as a helical span at residues 171 to 191; it reads NSIVIIWIVSCIIMIPQAIVM. Residues 192–222 are Extracellular-facing; that stretch reads ECSTVFPGLANKTTLFTVCDERWGGEIYPKM. N-linked (GlcNAc...) asparagine glycosylation is present at Asn202. The helical transmembrane segment at 223–243 threads the bilayer; sequence YHICFFLVTYMAPLCLMVLAY. Residues 244–304 are Cytoplasmic-facing; it reads LQIFRKLWCR…QIRARRKTAR (61 aa). A helical transmembrane segment spans residues 305–326; the sequence is MLMIVLLVFAICYLPISILNVL. Asn324 lines the suvorexant pocket. Residues 327 to 342 lie on the Extracellular side of the membrane; that stretch reads KRVFGMFAHTEDRETV. The helical transmembrane segment at 343–366 threads the bilayer; it reads YAWFTFSHWLVYANSAANPIIYNF. Residues 367 to 444 are Cytoplasmic-facing; sequence LSGKFREEFK…ANGAGPLQNW (78 aa).

It belongs to the G-protein coupled receptor 1 family.

The protein resides in the cell membrane. In terms of biological role, nonselective, high-affinity receptor for both orexin-A and orexin-B neuropeptides. Triggers an increase in cytoplasmic Ca(2+) levels in response to orexin-A binding. In Homo sapiens (Human), this protein is Orexin receptor type 2 (HCRTR2).